A 450-amino-acid chain; its full sequence is Deoxyguanosinetriphosphate triphosphohydrolase-like protein (450 aa).

An HD domain is found at 61–201 (RLTHSLEVAQ…AKLAPELNAD (141 aa)).

It belongs to the dGTPase family. Type 2 subfamily.

In Pasteurella multocida (strain Pm70), this protein is Deoxyguanosinetriphosphate triphosphohydrolase-like protein.